Reading from the N-terminus, the 343-residue chain is E3 ubiquitin-protein ligase SP1 (343 aa).

Residues 1 to 21 (MIPWGGVTCCLSAAALYLLGR) form a helical membrane-spanning segment. Topologically, residues 22 to 222 (SSGRDAEVLE…LISNLGKWSR (201 aa)) are chloroplast intermembrane. The helical transmembrane segment at 223–244 (LYKYASMGFTVLGVFLITKHVI) threads the bilayer. Topologically, residues 245–343 (DSVLERRRRR…IDLAVKTYRH (99 aa)) are cytoplasmic. The RING-type zinc finger occupies 296–331 (CVICLEQEYNAVFVPCGHMCCCTACSSHLTSCPLCR).

In terms of assembly, interacts with TOC33, TOC75-3 and TOC159. Auto-ubiquitinated.

It localises to the plastid. It is found in the chloroplast outer membrane. It catalyses the reaction S-ubiquitinyl-[E2 ubiquitin-conjugating enzyme]-L-cysteine + [acceptor protein]-L-lysine = [E2 ubiquitin-conjugating enzyme]-L-cysteine + N(6)-ubiquitinyl-[acceptor protein]-L-lysine.. The protein operates within protein modification; protein ubiquitination. E3 ubiquitin-protein ligase involved in the regulation of protein import in the chloroplast. Associates with TOC complexes and mediates ubiquitination of TOC components, promoting their degradation via the ubiquitin-proteasome system (UPS). Plays a role in the reorganization of the TOC machinery. Involved in a mechanism that regulates plastid biogenesis via UPS. Promotes stress tolerance by depleting the chloroplast protein import apparatus, which limits photosystem assembly and the potential for reactive oxygen species (ROS) formation. May act as negative regulator of programmed cell death (PCD) during biotic stress. The sequence is that of E3 ubiquitin-protein ligase SP1 from Arabidopsis thaliana (Mouse-ear cress).